The following is a 713-amino-acid chain: Polyribonucleotide nucleotidyltransferase (713 aa).

Mg(2+)-binding residues include aspartate 488 and aspartate 494. The region spanning 555–614 (PRIEVMNIPTDKIRDVIGSGGKVIREIVEKTGAKINIEDDGTVKIASSNGKEIEAAKKWI) is the KH domain. An S1 motif domain is found at 624-692 (GEIYEGTVVK…ERGKVRLSMK (69 aa)).

Belongs to the polyribonucleotide nucleotidyltransferase family. It depends on Mg(2+) as a cofactor.

It localises to the cytoplasm. It catalyses the reaction RNA(n+1) + phosphate = RNA(n) + a ribonucleoside 5'-diphosphate. Its function is as follows. Involved in mRNA degradation. Catalyzes the phosphorolysis of single-stranded polyribonucleotides processively in the 3'- to 5'-direction. The protein is Polyribonucleotide nucleotidyltransferase of Brucella anthropi (strain ATCC 49188 / DSM 6882 / CCUG 24695 / JCM 21032 / LMG 3331 / NBRC 15819 / NCTC 12168 / Alc 37) (Ochrobactrum anthropi).